The chain runs to 259 residues: NAP1-related protein 1 (259 aa).

Positions Met-1–Gly-15 are enriched in basic and acidic residues. Residues Met-1–Pro-20 are disordered. The stretch at Val-21–Arg-62 forms a coiled coil. The disordered stretch occupies residues Glu-228 to Asn-259.

The protein belongs to the nucleosome assembly protein (NAP) family.

The protein localises to the nucleus. It localises to the cytoplasm. Its function is as follows. Acts as a histone H2A/H2B chaperone in nucleosome assembly. The polypeptide is NAP1-related protein 1 (Oryza sativa subsp. indica (Rice)).